The sequence spans 216 residues: MRDQWICLALVLCALHSACGLYFHISETERKCFIEEVPDETTVIVNYKVELYDPRSNGFMPSSPGIGMHVEVRDSDDKVILSRVYSSQGRMSFTSHTPGEHVICMYSNSTAWFNGAQLRVHLDIQVGEHAIDYANVAQKEKLTELQLRIRQLLDQVEQITKEQNYQRYREERFRHTSESTNSRVLWWSLAQTVVLVCMGFWQMRHLKSFFEAKKLV.

Positions 1 to 20 (MRDQWICLALVLCALHSACG) are cleaved as a signal peptide. The Lumenal segment spans residues 21–183 (LYFHISETER…RHTSESTNSR (163 aa)). The GOLD domain maps to 30-126 (RKCFIEEVPD…QLRVHLDIQV (97 aa)). Residues 134–164 (ANVAQKEKLTELQLRIRQLLDQVEQITKEQN) are a coiled coil. Residues 184 to 203 (VLWWSLAQTVVLVCMGFWQM) form a helical membrane-spanning segment. Topologically, residues 204-216 (RHLKSFFEAKKLV) are cytoplasmic. The Prevents secretion from ER signature appears at 213 to 216 (KKLV).

The protein belongs to the EMP24/GP25L family.

The protein resides in the endoplasmic reticulum membrane. Functionally, eca and bai are essential, though not redundant, for dorsoventral patterning of the embryo. Specifically required during early embryogenesis for the activity of maternal tkv, while the zygotic tkv is not affected. The sequence is that of Transmembrane emp24 domain-containing protein eca from Drosophila mojavensis (Fruit fly).